Reading from the N-terminus, the 282-residue chain is Fused uL13/uS9 ribosomal subunit protein (282 aa).

The tract at residues 1-141 (MLLMIINGEG…LGEISELLGA (141 aa)) is large ribosomal subunit protein uL13. Residues 150-282 (MKKVIHTSGK…ARARRQKSYR (133 aa)) are small ribosomal subunit protein uS9. Residues 259–282 (DPRRSEPKKYGGRGARARRQKSYR) form a disordered region. Over residues 273 to 282 (ARARRQKSYR) the composition is skewed to basic residues.

The protein in the N-terminal section; belongs to the universal ribosomal protein uL13 family. It in the C-terminal section; belongs to the universal ribosomal protein uS9 family. In terms of assembly, L13 is part of the 50S ribosomal subunit. S9 is part of the 30S ribosomal subunit.

Functionally, L13 protein is one of the early assembly proteins of the 50S ribosomal subunit, although it is not seen to bind rRNA by itself. It is important during the early stages of 50S assembly. The sequence is that of Fused uL13/uS9 ribosomal subunit protein (rpl13/rps9) from Methanothermobacter thermautotrophicus (strain ATCC 29096 / DSM 1053 / JCM 10044 / NBRC 100330 / Delta H) (Methanobacterium thermoautotrophicum).